Consider the following 250-residue polypeptide: Exosome complex component Rrp41 (250 aa).

Belongs to the RNase PH family. Rrp41 subfamily. Component of the archaeal exosome complex. Forms a hexameric ring-like arrangement composed of 3 Rrp41-Rrp42 heterodimers. The hexameric ring associates with a trimer of Rrp4 and/or Csl4 subunits.

The protein resides in the cytoplasm. Its function is as follows. Catalytic component of the exosome, which is a complex involved in RNA degradation. Has 3'-&gt;5' exoribonuclease activity. Can also synthesize heteromeric RNA-tails. This Pyrococcus furiosus (strain ATCC 43587 / DSM 3638 / JCM 8422 / Vc1) protein is Exosome complex component Rrp41.